A 558-amino-acid polypeptide reads, in one-letter code: MVMYARKQPRLGDGCTDRRDSQPYQTLKYSSKSHPDHRHEKMRDSNDATPPCKMLRRSDSPDNKHMDNTGHGRAKAIHPHRGREREGGTSISPQENSHNHSSLHSSNSHSNPNKSSDTPFEPADDWSEHISSSGKKYYYNCRTEVSQWEKPKEWLEREQRQKEATKTAAVVNSFPKDRDYRREAMQATPASYSSTKSSIATEKPSSLTPSSSSAAVSGLDVPNSASSASGSTVPVSPVMQSPAPPTLLQDPSLLRQLLLALQTALQLNNASVDMAKINEVLTAAVTQASLQSILHKILTAGPSAFNITTLLSQATQLSNQVAQQSSQSPMSLTSDASSPRSYVSPRISTPQTNTASLKPPLSTTPVSSQTKINAMTVKSSSLPPPSSQQPLSTEKHHDNGNSPRTLQRQSSQRSPSPGPNHMGSNSSSSSNNGGGGGGQGPGVVSGAMPPGSVPPGTAPGRATCSFTPTLAAHFNENLIKHVQGWPAEHVEKQASRLREEAHTMGSIYMSENCTELKNLRSLVRVCEIQATLREQRILFLRQQIKELEKLKNQNSFMV.

Disordered stretches follow at residues 1–129 (MVMY…WSEH), 159–244 (QRQK…SPAP), and 321–461 (VAQQ…APGR). Residues 22-32 (QPYQTLKYSSK) show a composition bias toward polar residues. Basic and acidic residues-rich tracts occupy residues 33-46 (SHPD…RDSN) and 56-70 (RRSD…DNTG). The span at 72 to 82 (GRAKAIHPHRG) shows a compositional bias: basic residues. Positions 99 to 116 (NHSSLHSSNSHSNPNKSS) are enriched in low complexity. A WW domain is found at 120–153 (FEPADDWSEHISSSGKKYYYNCRTEVSQWEKPKE). Over residues 175–184 (PKDRDYRREA) the composition is skewed to basic and acidic residues. Polar residues predominate over residues 188–200 (TPASYSSTKSSIA). The span at 204 to 217 (PSSLTPSSSSAAVS) shows a compositional bias: low complexity. Polar residues-rich tracts occupy residues 223–234 (NSASSASGSTVP) and 321–378 (VAQQ…MTVK). Low complexity predominate over residues 402 to 431 (SPRTLQRQSSQRSPSPGPNHMGSNSSSSSN). The segment covering 432–443 (NGGGGGGQGPGV) has biased composition (gly residues). The stretch at 529-555 (QATLREQRILFLRQQIKELEKLKNQNS) forms a coiled coil.

The protein resides in the nucleus. Functionally, acts as a linker between gene transcription and histone H2B monoubiquitination at 'Lys-120' (H2BK120ub1). Positive regulator of amino acid starvation-induced autophagy. Positively regulates MTOR activity. May negatively regulate the ubiquitin proteasome pathway. In Danio rerio (Zebrafish), this protein is WW domain-containing adapter protein with coiled-coil (waca).